Consider the following 463-residue polypeptide: Eukaryotic translation initiation factor 3 subunit E (463 aa).

A PCI domain is found at 224–407; the sequence is FNLGENQGCQ…NMLHITRPHA (184 aa). The segment at 432–463 is disordered; the sequence is QSSVGEPRERGERGERGNKGGRGRPRTQEVAA. The span at 437 to 449 shows a compositional bias: basic and acidic residues; that stretch reads EPRERGERGERGN.

The protein belongs to the eIF-3 subunit E family. Component of the eukaryotic translation initiation factor 3 (eIF-3) complex.

It localises to the cytoplasm. Component of the eukaryotic translation initiation factor 3 (eIF-3) complex, which is involved in protein synthesis of a specialized repertoire of mRNAs and, together with other initiation factors, stimulates binding of mRNA and methionyl-tRNAi to the 40S ribosome. The eIF-3 complex specifically targets and initiates translation of a subset of mRNAs involved in cell proliferation. This chain is Eukaryotic translation initiation factor 3 subunit E, found in Cryptococcus neoformans var. neoformans serotype D (strain JEC21 / ATCC MYA-565) (Filobasidiella neoformans).